A 398-amino-acid polypeptide reads, in one-letter code: Acetate kinase (398 aa).

N7 is a Mg(2+) binding site. K14 provides a ligand contact to ATP. R91 serves as a coordination point for substrate. The active-site Proton donor/acceptor is the D148. ATP-binding positions include 208 to 212 (HLGNG), 283 to 285 (DFR), and 331 to 335 (GLGEN). E384 lines the Mg(2+) pocket.

The protein belongs to the acetokinase family. Homodimer. Requires Mg(2+) as cofactor. The cofactor is Mn(2+).

It is found in the cytoplasm. It carries out the reaction acetate + ATP = acetyl phosphate + ADP. It participates in metabolic intermediate biosynthesis; acetyl-CoA biosynthesis; acetyl-CoA from acetate: step 1/2. In terms of biological role, catalyzes the formation of acetyl phosphate from acetate and ATP. Can also catalyze the reverse reaction. The sequence is that of Acetate kinase from Natranaerobius thermophilus (strain ATCC BAA-1301 / DSM 18059 / JW/NM-WN-LF).